A 177-amino-acid chain; its full sequence is Large ribosomal subunit protein uL6 (177 aa).

The protein belongs to the universal ribosomal protein uL6 family. Part of the 50S ribosomal subunit.

Functionally, this protein binds to the 23S rRNA, and is important in its secondary structure. It is located near the subunit interface in the base of the L7/L12 stalk, and near the tRNA binding site of the peptidyltransferase center. In Rickettsia prowazekii (strain Madrid E), this protein is Large ribosomal subunit protein uL6.